The following is a 273-amino-acid chain: Dermonecrotic toxin LruSicTox-alphaIC1d (273 aa).

The active site involves H5. The Mg(2+) site is built by E25 and D27. H41 (nucleophile) is an active-site residue. Cystine bridges form between C45/C51 and C47/C190. Residue D85 participates in Mg(2+) binding.

Belongs to the arthropod phospholipase D family. Class II subfamily. The cofactor is Mg(2+). In terms of tissue distribution, expressed by the venom gland.

The protein localises to the secreted. The catalysed reaction is an N-(acyl)-sphingosylphosphocholine = an N-(acyl)-sphingosyl-1,3-cyclic phosphate + choline. It catalyses the reaction an N-(acyl)-sphingosylphosphoethanolamine = an N-(acyl)-sphingosyl-1,3-cyclic phosphate + ethanolamine. It carries out the reaction a 1-acyl-sn-glycero-3-phosphocholine = a 1-acyl-sn-glycero-2,3-cyclic phosphate + choline. The enzyme catalyses a 1-acyl-sn-glycero-3-phosphoethanolamine = a 1-acyl-sn-glycero-2,3-cyclic phosphate + ethanolamine. Functionally, dermonecrotic toxins cleave the phosphodiester linkage between the phosphate and headgroup of certain phospholipids (sphingolipid and lysolipid substrates), forming an alcohol (often choline) and a cyclic phosphate. This toxin acts on sphingomyelin (SM). It may also act on ceramide phosphoethanolamine (CPE), lysophosphatidylcholine (LPC) and lysophosphatidylethanolamine (LPE), but not on lysophosphatidylserine (LPS), and lysophosphatidylglycerol (LPG). It acts by transphosphatidylation, releasing exclusively cyclic phosphate products as second products. Induces dermonecrosis, hemolysis, increased vascular permeability, edema, inflammatory response, and platelet aggregation. In Loxosceles rufescens (Mediterranean recluse spider), this protein is Dermonecrotic toxin LruSicTox-alphaIC1d.